The primary structure comprises 375 residues: Glutamate 5-kinase (375 aa).

Residue Lys-13 participates in ATP binding. 3 residues coordinate substrate: Ser-54, Asp-141, and Asn-153. ATP contacts are provided by residues 173 to 174 and 216 to 222; these read TD and TGGMATK. Residues 281-359 form the PUA domain; sequence TGKIFIDAGA…EAIAAVLGYV (79 aa).

It belongs to the glutamate 5-kinase family.

It is found in the cytoplasm. The catalysed reaction is L-glutamate + ATP = L-glutamyl 5-phosphate + ADP. It participates in amino-acid biosynthesis; L-proline biosynthesis; L-glutamate 5-semialdehyde from L-glutamate: step 1/2. Functionally, catalyzes the transfer of a phosphate group to glutamate to form L-glutamate 5-phosphate. The polypeptide is Glutamate 5-kinase (Synechocystis sp. (strain ATCC 27184 / PCC 6803 / Kazusa)).